The chain runs to 344 residues: Holliday junction branch migration complex subunit RuvB (344 aa).

The large ATPase domain (RuvB-L) stretch occupies residues 4-184 (QDRIIDANAK…FGIVQRLEFY (181 aa)). ATP-binding positions include Arg24, Gly65, Lys68, Thr69, Thr70, 131-133 (EDF), Arg174, Tyr184, and Arg221. Mg(2+) is bound at residue Thr69. Residues 185-255 (NIEDLTHIVE…IADLALNMLN (71 aa)) are small ATPAse domain (RuvB-S). The interval 258-344 (EHGFDHMDRR…ALKQDSLPGI (87 aa)) is head domain (RuvB-H). Arg294, Arg313, and Arg318 together coordinate DNA.

It belongs to the RuvB family. In terms of assembly, homohexamer. Forms an RuvA(8)-RuvB(12)-Holliday junction (HJ) complex. HJ DNA is sandwiched between 2 RuvA tetramers; dsDNA enters through RuvA and exits via RuvB. An RuvB hexamer assembles on each DNA strand where it exits the tetramer. Each RuvB hexamer is contacted by two RuvA subunits (via domain III) on 2 adjacent RuvB subunits; this complex drives branch migration. In the full resolvosome a probable DNA-RuvA(4)-RuvB(12)-RuvC(2) complex forms which resolves the HJ.

It is found in the cytoplasm. It catalyses the reaction ATP + H2O = ADP + phosphate + H(+). In terms of biological role, the RuvA-RuvB-RuvC complex processes Holliday junction (HJ) DNA during genetic recombination and DNA repair, while the RuvA-RuvB complex plays an important role in the rescue of blocked DNA replication forks via replication fork reversal (RFR). RuvA specifically binds to HJ cruciform DNA, conferring on it an open structure. The RuvB hexamer acts as an ATP-dependent pump, pulling dsDNA into and through the RuvAB complex. RuvB forms 2 homohexamers on either side of HJ DNA bound by 1 or 2 RuvA tetramers; 4 subunits per hexamer contact DNA at a time. Coordinated motions by a converter formed by DNA-disengaged RuvB subunits stimulates ATP hydrolysis and nucleotide exchange. Immobilization of the converter enables RuvB to convert the ATP-contained energy into a lever motion, pulling 2 nucleotides of DNA out of the RuvA tetramer per ATP hydrolyzed, thus driving DNA branch migration. The RuvB motors rotate together with the DNA substrate, which together with the progressing nucleotide cycle form the mechanistic basis for DNA recombination by continuous HJ branch migration. Branch migration allows RuvC to scan DNA until it finds its consensus sequence, where it cleaves and resolves cruciform DNA. The polypeptide is Holliday junction branch migration complex subunit RuvB (Saccharophagus degradans (strain 2-40 / ATCC 43961 / DSM 17024)).